A 1012-amino-acid chain; its full sequence is AP-2 complex subunit alpha-1 (1012 aa).

4 HEAT repeats span residues 254-289 (AMRA…VVKN), 354-391 (DIIK…VSNA), 393-430 (DIVE…DLSW), and 525-565 (PTIP…CIDV). Positions 652–678 (STDPESVARSLSHPNGTLSNIDPQTPS) are disordered. The segment covering 663–675 (SHPNGTLSNIDPQ) has biased composition (polar residues). Positions 742–841 (ALCLKDSGVL…LDFSYKFGAN (100 aa)) constitute a GAE domain.

This sequence belongs to the adaptor complexes large subunit family. As to quaternary structure, adaptor protein complex 2 (AP-2) is a heterotetramer composed of two large adaptins (alpha-type and beta-type subunits), a medium adaptin (mu-type subunit) and a small adaptin (sigma-type subunit). Binds to EPSIN2.

The protein resides in the membrane. It is found in the coated pit. Its function is as follows. Subunit of the adaptor protein complex 2 (AP-2). Adaptor protein complexes function in protein transport via transport vesicles in different membrane traffic pathways. Adaptor protein complexes are vesicle coat components and appear to be involved in cargo selection and vesicle formation. AP-2 is involved in clathrin-dependent endocytosis in which cargo proteins are incorporated into vesicles surrounded by clathrin (clathrin-coated vesicles, CCVs) which are destined for fusion with the early endosome. The complex binds polyphosphoinositides. The sequence is that of AP-2 complex subunit alpha-1 (ALPHA-ADR) from Arabidopsis thaliana (Mouse-ear cress).